A 244-amino-acid chain; its full sequence is 5-oxoprolinase subunit A (244 aa).

This sequence belongs to the LamB/PxpA family. Forms a complex composed of PxpA, PxpB and PxpC.

The enzyme catalyses 5-oxo-L-proline + ATP + 2 H2O = L-glutamate + ADP + phosphate + H(+). Catalyzes the cleavage of 5-oxoproline to form L-glutamate coupled to the hydrolysis of ATP to ADP and inorganic phosphate. The sequence is that of 5-oxoprolinase subunit A from Salmonella schwarzengrund (strain CVM19633).